The primary structure comprises 332 residues: Transcription initiation factor IIB 2 (332 aa).

Residues 1–10 (MSDTITTRTY) are compositionally biased toward polar residues. Positions 1-36 (MSDTITTRTYSADAKSRDVRPRESERDETQQDETQV) are disordered. Positions 14–29 (AKSRDVRPRESERDET) are enriched in basic and acidic residues. The segment at 33 to 63 (ETQVCPECSGHLVTDEEHGETICEDCGLVVE) adopts a TFIIB-type zinc-finger fold. 4 residues coordinate Zn(2+): Cys-37, Cys-40, Cys-55, and Cys-58. Residues 77 to 106 (DSAERDSKSRVGAPTTKMMHDKGLSTNIGW) form a disordered region. 2 consecutive repeat copies span residues 149 to 232 (GEID…VREL) and 243 to 324 (QYVP…ELLE).

Belongs to the TFIIB family.

Its function is as follows. Stabilizes TBP binding to an archaeal box-A promoter. Also responsible for recruiting RNA polymerase II to the pre-initiation complex (DNA-TBP-TFIIB). This chain is Transcription initiation factor IIB 2, found in Haloferax volcanii (strain ATCC 29605 / DSM 3757 / JCM 8879 / NBRC 14742 / NCIMB 2012 / VKM B-1768 / DS2) (Halobacterium volcanii).